Here is a 335-residue protein sequence, read N- to C-terminus: Probable cytosolic iron-sulfur protein assembly protein Ciao1 (335 aa).

WD repeat units lie at residues 12-51, 57-96, 101-140, 146-185, 192-231, 250-289, and 301-335; these read GHKGRIWGVAWHPKGNTFASCGEDKAIRIWSLSGNSWSTK, GHKRTIREIRWSPCGQYLASASFDATTAIWSKSSGEFECN, GHENEVKSVSWSKSGGLLATCSRDKSVWIWEVAGDDEFEC, PHTQDVKRVVWHPTKEILASASYDNTIKMFAESALDSDWD, SHTSTVWSIDFDADGERLVSCSDDTTLKIWRAYHPGNDAG, QHSRAIYDVSWCKLTGLIATACGDDGIRIFKESSDSKRDE, and AHEQDVNSVEWNPVMAGQLISCSDDGTIKIWKMLD.

The protein belongs to the WD repeat CIA1 family.

In terms of biological role, essential component of the cytosolic iron-sulfur (Fe/S) protein assembly machinery. Required for the maturation of extramitochondrial Fe/S proteins. This chain is Probable cytosolic iron-sulfur protein assembly protein Ciao1, found in Drosophila willistoni (Fruit fly).